A 140-amino-acid polypeptide reads, in one-letter code: Putative pre-16S rRNA nuclease (140 aa).

It belongs to the YqgF nuclease family.

It localises to the cytoplasm. In terms of biological role, could be a nuclease involved in processing of the 5'-end of pre-16S rRNA. The protein is Putative pre-16S rRNA nuclease of Pasteurella multocida (strain Pm70).